Reading from the N-terminus, the 493-residue chain is 3-octaprenyl-4-hydroxybenzoate carboxy-lyase (493 aa).

Mn(2+) is bound at residue Asn177. Residues 180-182 (IYR), 194-196 (RWL), and 199-200 (RG) each bind prenylated FMN. Glu243 provides a ligand contact to Mn(2+). Asp292 functions as the Proton donor in the catalytic mechanism.

The protein belongs to the UbiD family. As to quaternary structure, homohexamer. The cofactor is prenylated FMN. Mn(2+) serves as cofactor.

It is found in the cell membrane. It carries out the reaction a 4-hydroxy-3-(all-trans-polyprenyl)benzoate + H(+) = a 2-(all-trans-polyprenyl)phenol + CO2. Its pathway is cofactor biosynthesis; ubiquinone biosynthesis. Its function is as follows. Catalyzes the decarboxylation of 3-octaprenyl-4-hydroxy benzoate to 2-octaprenylphenol, an intermediate step in ubiquinone biosynthesis. The protein is 3-octaprenyl-4-hydroxybenzoate carboxy-lyase of Colwellia psychrerythraea (strain 34H / ATCC BAA-681) (Vibrio psychroerythus).